We begin with the raw amino-acid sequence, 961 residues long: Ras-interacting protein 1 (961 aa).

A compositionally biased stretch (basic and acidic residues) spans Met-1–Gly-10. Disordered regions lie at residues Met-1–Val-21, Leu-35–Glu-70, and Arg-96–Ala-116. The segment covering Ser-41–Ser-57 has biased composition (low complexity). Positions Pro-59–His-68 are enriched in pro residues. An Omega-N-methylarginine modification is found at Arg-96. A compositionally biased stretch (gly residues) spans Ser-98–Gly-110. A Ras-associating domain is found at Pro-141 to Glu-253. The segment at Ala-261–Met-352 is disordered. A phosphoserine mark is found at Ser-274 and Ser-286. A compositionally biased stretch (low complexity) spans Ala-284–Gly-295. Gly residues predominate over residues Pro-296–Gly-307. Over residues Asn-314–Gln-327 the composition is skewed to low complexity. Phosphoserine occurs at positions 320, 322, 325, and 413. The region spanning Gly-594–Thr-895 is the Dilute domain.

Interacts with Ras family members that have been activated by GTP binding. Interacts with HRAS, RAP1A, RAP2, RRAS, RAF1 and RRAS2. Interacts with MYH9 and ARHGAP29. Detected in kidney, heart, skeletal muscle, small intestine and lung.

It localises to the cytoplasm. The protein localises to the perinuclear region. It is found in the golgi apparatus. The protein resides in the golgi stack. Functionally, required for the proper formation of vascular structures that develop via both vasculogenesis and angiogenesis. Acts as a critical and vascular-specific regulator of GTPase signaling, cell architecture, and adhesion, which is essential for endothelial cell morphogenesis and blood vessel tubulogenesis. Regulates the activity of Rho GTPases in part by recruiting ARHGAP29 and suppressing RhoA signaling and dampening ROCK and MYH9 activities in endothelial cells. May act as effector for Golgi-bound HRAS and other Ras-like proteins. May promote HRAS-mediated transformation. Negative regulator of amino acid starvation-induced autophagy. This Mus musculus (Mouse) protein is Ras-interacting protein 1 (Rasip1).